A 341-amino-acid chain; its full sequence is Holliday junction branch migration complex subunit RuvB (341 aa).

The interval 1-182 (MTDADPTLRP…FGIPTRLLFY (182 aa)) is large ATPase domain (RuvB-L). ATP-binding positions include Leu21, Arg22, Gly63, Lys66, Thr67, Thr68, 129 to 131 (EDF), Arg172, Tyr182, and Arg219. Residue Thr67 coordinates Mg(2+). The tract at residues 183 to 253 (TVDELFEIVS…LADHALTRLG (71 aa)) is small ATPAse domain (RuvB-S). Residues 256-341 (QLGLDGADRR…RPPGQSDLFG (86 aa)) are head domain (RuvB-H). 3 residues coordinate DNA: Arg292, Arg311, and Arg316.

It belongs to the RuvB family. In terms of assembly, homohexamer. Forms an RuvA(8)-RuvB(12)-Holliday junction (HJ) complex. HJ DNA is sandwiched between 2 RuvA tetramers; dsDNA enters through RuvA and exits via RuvB. An RuvB hexamer assembles on each DNA strand where it exits the tetramer. Each RuvB hexamer is contacted by two RuvA subunits (via domain III) on 2 adjacent RuvB subunits; this complex drives branch migration. In the full resolvosome a probable DNA-RuvA(4)-RuvB(12)-RuvC(2) complex forms which resolves the HJ.

It localises to the cytoplasm. It catalyses the reaction ATP + H2O = ADP + phosphate + H(+). The RuvA-RuvB-RuvC complex processes Holliday junction (HJ) DNA during genetic recombination and DNA repair, while the RuvA-RuvB complex plays an important role in the rescue of blocked DNA replication forks via replication fork reversal (RFR). RuvA specifically binds to HJ cruciform DNA, conferring on it an open structure. The RuvB hexamer acts as an ATP-dependent pump, pulling dsDNA into and through the RuvAB complex. RuvB forms 2 homohexamers on either side of HJ DNA bound by 1 or 2 RuvA tetramers; 4 subunits per hexamer contact DNA at a time. Coordinated motions by a converter formed by DNA-disengaged RuvB subunits stimulates ATP hydrolysis and nucleotide exchange. Immobilization of the converter enables RuvB to convert the ATP-contained energy into a lever motion, pulling 2 nucleotides of DNA out of the RuvA tetramer per ATP hydrolyzed, thus driving DNA branch migration. The RuvB motors rotate together with the DNA substrate, which together with the progressing nucleotide cycle form the mechanistic basis for DNA recombination by continuous HJ branch migration. Branch migration allows RuvC to scan DNA until it finds its consensus sequence, where it cleaves and resolves cruciform DNA. The protein is Holliday junction branch migration complex subunit RuvB of Ruegeria pomeroyi (strain ATCC 700808 / DSM 15171 / DSS-3) (Silicibacter pomeroyi).